The following is a 301-amino-acid chain: Sulfate adenylyltransferase subunit 2 1 (301 aa).

Belongs to the PAPS reductase family. CysD subfamily. As to quaternary structure, heterodimer composed of CysD, the smaller subunit, and CysN.

The catalysed reaction is sulfate + ATP + H(+) = adenosine 5'-phosphosulfate + diphosphate. Its pathway is sulfur metabolism; hydrogen sulfide biosynthesis; sulfite from sulfate: step 1/3. With CysN forms the ATP sulfurylase (ATPS) that catalyzes the adenylation of sulfate producing adenosine 5'-phosphosulfate (APS) and diphosphate, the first enzymatic step in sulfur assimilation pathway. APS synthesis involves the formation of a high-energy phosphoric-sulfuric acid anhydride bond driven by GTP hydrolysis by CysN coupled to ATP hydrolysis by CysD. The protein is Sulfate adenylyltransferase subunit 2 1 of Shewanella sediminis (strain HAW-EB3).